The sequence spans 488 residues: Glutamyl-tRNA(Gln) amidotransferase subunit A (488 aa).

Residues lysine 80 and serine 155 each act as charge relay system in the active site. Residue serine 179 is the Acyl-ester intermediate of the active site.

The protein belongs to the amidase family. GatA subfamily. As to quaternary structure, heterotrimer of A, B and C subunits.

The catalysed reaction is L-glutamyl-tRNA(Gln) + L-glutamine + ATP + H2O = L-glutaminyl-tRNA(Gln) + L-glutamate + ADP + phosphate + H(+). Functionally, allows the formation of correctly charged Gln-tRNA(Gln) through the transamidation of misacylated Glu-tRNA(Gln) in organisms which lack glutaminyl-tRNA synthetase. The reaction takes place in the presence of glutamine and ATP through an activated gamma-phospho-Glu-tRNA(Gln). The chain is Glutamyl-tRNA(Gln) amidotransferase subunit A from Chloroflexus aggregans (strain MD-66 / DSM 9485).